We begin with the raw amino-acid sequence, 650 residues long: Threonine--tRNA ligase (650 aa).

One can recognise a TGS domain in the interval 5–67 (NKSMFIKLKD…QEGDQVILWG (63 aa)). The interval 246–537 (DHKLLGAKLD…LIEHYVGKFP (292 aa)) is catalytic. C337, H388, and H514 together coordinate Zn(2+).

It belongs to the class-II aminoacyl-tRNA synthetase family. In terms of assembly, homodimer. Requires Zn(2+) as cofactor.

It localises to the cytoplasm. The enzyme catalyses tRNA(Thr) + L-threonine + ATP = L-threonyl-tRNA(Thr) + AMP + diphosphate + H(+). In terms of biological role, catalyzes the attachment of threonine to tRNA(Thr) in a two-step reaction: L-threonine is first activated by ATP to form Thr-AMP and then transferred to the acceptor end of tRNA(Thr). Also edits incorrectly charged L-seryl-tRNA(Thr). The polypeptide is Threonine--tRNA ligase (Protochlamydia amoebophila (strain UWE25)).